The primary structure comprises 2492 residues: Transcriptional regulator ATRX (2492 aa).

A disordered region spans residues 1-146 (MTAEPMSESK…DKDDFKGPEF (146 aa)). A Glycyl lysine isopeptide (Lys-Gly) (interchain with G-Cter in SUMO2) cross-link involves residue lysine 10. The span at 17–27 (KLHDFLAHSSE) shows a compositional bias: basic and acidic residues. Residues serine 25 and serine 34 each carry the phosphoserine modification. Residues 40–57 (MNQNTDKISGSGSNSDMM) show a composition bias toward polar residues. The span at 58–72 (ENSKEEGTSSSEKSK) shows a compositional bias: basic and acidic residues. Position 89 is a phosphotyrosine (tyrosine 89). Residues serine 92 and serine 112 each carry the phosphoserine modification. Residues 92–108 (SDDEKPLDDETVNEDAS) show a composition bias toward acidic residues. The span at 135–146 (NEDKDDFKGPEF) shows a compositional bias: basic and acidic residues. Glycyl lysine isopeptide (Lys-Gly) (interchain with G-Cter in SUMO2) cross-links involve residues lysine 138 and lysine 142. Residues 159-296 (KRGEDGLHGI…LEQLLQQNKK (138 aa)) enclose the ADD domain. The GATA-type; atypical zinc finger occupies 170 to 206 (SCTACGQQVNHFQKDSIYRHPSLQVLICKNCFKYYMS). Serine 213 carries the phosphoserine modification. Residues 217 to 272 (DEQCRWCAEGGNLICCDFCHNAFCKKCILRNLGRKELSTIMDENNQWYCYICHPEP) form a PHD-type; atypical zinc finger. Residue lysine 299 forms a Glycyl lysine isopeptide (Lys-Gly) (interchain with G-Cter in SUMO2) linkage. Serine 316 carries the post-translational modification Phosphoserine. A Glycyl lysine isopeptide (Lys-Gly) (interchain with G-Cter in SUMO2) cross-link involves residue lysine 438. Composition is skewed to basic and acidic residues over residues 457–473 (ISKS…DSEH) and 481–502 (EEQR…KEEP). The interval 457–581 (ISKSEAKLSR…GGIKSKTTAK (125 aa)) is disordered. Positions 557-567 (ESSSVKLSISS) are enriched in low complexity. Residues 581–594 (KVTKELYVKLTPVS) carry the PxVxL motif motif. Threonine 591 carries the phosphothreonine modification. Positions 593 to 619 (VSLSNSPIKGADCQEVPQDKDGYKSCG) are disordered. Phosphoserine occurs at positions 594 and 598. Residue lysine 623 forms a Glycyl lysine isopeptide (Lys-Gly) (interchain with G-Cter in SUMO1); alternate linkage. Lysine 623 participates in a covalent cross-link: Glycyl lysine isopeptide (Lys-Gly) (interchain with G-Cter in SUMO2); alternate. A Phosphoserine modification is found at serine 634. The segment at 652–949 (DLRRSPRVKT…AETKEKSKHL (298 aa)) is disordered. Threonine 674 carries the post-translational modification Phosphothreonine. Serine 675, serine 677, serine 729, and serine 731 each carry phosphoserine. Basic and acidic residues predominate over residues 755–777 (NEIHTNHKTLYDLKTQAGKDDKG). Residues serine 784, serine 819, serine 849, serine 850, serine 875, and serine 876 each carry the phosphoserine modification. Positions 843 to 864 (NTKDFDSSEDEKHSKKGMDNQG) are enriched in basic and acidic residues. Basic and acidic residues predominate over residues 878–887 (DAERKQEREN). Residue serine 889 is modified to Phosphoserine. Basic and acidic residues-rich tracts occupy residues 894 to 909 (TVDK…DRLP) and 920 to 944 (GVDK…ETKE). Residue serine 962 is modified to Phosphoserine. At lysine 967 the chain carries N6-acetyllysine. Basic and acidic residues predominate over residues 967–1004 (KFLKKDQSDETSEDDKKQSKKGTEEKKKTSDFKKKVIK). A disordered region spans residues 967-1479 (KFLKKDQSDE…SKSPGKGRKK (513 aa)). The residue at position 974 (serine 974) is a Phosphoserine. Threonine 977 is subject to Phosphothreonine. Lysine 1004 participates in a covalent cross-link: Glycyl lysine isopeptide (Lys-Gly) (interchain with G-Cter in SUMO2). Serine 1011, serine 1012, and serine 1013 each carry phosphoserine. Residues 1015–1027 (GTEKLPEREEICH) are compositionally biased toward basic and acidic residues. A compositionally biased stretch (basic residues) spans 1045-1055 (KNKKIRDKTSK). Basic and acidic residues-rich tracts occupy residues 1056–1082 (KKDE…DKKS) and 1103–1139 (KRQD…ERRN). A Phosphoserine modification is found at serine 1061. Tyrosine 1063 is modified (phosphotyrosine). Over residues 1167 to 1195 (KKKQRTSSKKKAVIVKEKKRNSLRTSTKR) the composition is skewed to basic residues. An interaction with DAXX region spans residues 1189–1326 (LRTSTKRKQA…KNQVNSESDS (138 aa)). Positions 1233 to 1246 (LVLSSHTGFCQSSG) are enriched in polar residues. Phosphoserine is present on residues serine 1244, serine 1245, and serine 1253. Basic and acidic residues predominate over residues 1267-1281 (PENRIAKKMLLEEIK). The span at 1286 to 1297 (SDEDGSSDDEPE) shows a compositional bias: acidic residues. Basic and acidic residues predominate over residues 1298 to 1308 (EGKKRTGKQNE). Phosphoserine is present on residues serine 1322, serine 1324, and serine 1326. A compositionally biased stretch (basic residues) spans 1334–1345 (PRYRHRLLRHKL). Residues serine 1348 and serine 1352 each carry the phosphoserine modification. Composition is skewed to basic and acidic residues over residues 1353-1368 (GEEK…EVKG) and 1408-1417 (KKAELEENQR). The span at 1419-1428 (YKQKKKRRRI) shows a compositional bias: basic residues. A compositionally biased stretch (acidic residues) spans 1443-1468 (EEEEEEKEEEEEEEEEEEEEEEDEND). Residue lysine 1488 forms a Glycyl lysine isopeptide (Lys-Gly) (interchain with G-Cter in SUMO2) linkage. The residue at position 1527 (serine 1527) is a Phosphoserine. Threonine 1529 carries the post-translational modification Phosphothreonine. Residues 1581 to 1768 (KTKKSPGSGC…HCMVNFIKEN (188 aa)) form the Helicase ATP-binding domain. Residue 1594 to 1601 (HCMGLGKT) coordinates ATP. Positions 1719–1722 (DEGH) match the DEGH box motif. 2 positions are modified to phosphoserine: serine 1906 and serine 1913. The interval 1913 to 2000 (SDSDETSMSL…SSNPSSPAPD (88 aa)) is disordered. Positions 1929–1938 (KKKKKGKKGK) are enriched in basic residues. A Glycyl lysine isopeptide (Lys-Gly) (interchain with G-Cter in SUMO1); alternate cross-link involves residue lysine 1982. Lysine 1982 participates in a covalent cross-link: Glycyl lysine isopeptide (Lys-Gly) (interchain with G-Cter in SUMO2); alternate. Residue lysine 1987 forms a Glycyl lysine isopeptide (Lys-Gly) (interchain with G-Cter in SUMO2) linkage. Residues 1990–1999 (SSSNPSSPAP) show a composition bias toward low complexity. 2 positions are modified to phosphoserine: serine 1992 and serine 1996. The interval 2010–2280 (DAEVLEHSGK…RKAAWAEYEA (271 aa)) is interaction with MECP2. The Helicase C-terminal domain occupies 2025-2205 (EILRMAEEIG…ERHFTMNELT (181 aa)). Residue serine 2220 is modified to Phosphoserine. The segment at 2462 to 2492 (PVAGGMQPPPLQRAPPPMRSKNPGPSQGKSM) is disordered. The span at 2468–2479 (QPPPLQRAPPPM) shows a compositional bias: pro residues. An omega-N-methylarginine mark is found at arginine 2474 and arginine 2480.

This sequence belongs to the SNF2/RAD54 helicase family. Interacts with DAXX to form the chromatin remodeling complex ATRX:DAXX. Probably binds EZH2. Binds annexin V in a calcium and phosphatidylcholine/phosphatidylserine-dependent manner. Interacts directly with CBX5 via the PxVxL motif. Interacts with RAD50, MRE11 and NBN; indicative for an association with the MRN complex. Interacts with histone MACROH2A1. Interacts with histone H3 peptides methylated at 'Lys-10' with preferences H3K9me3 &gt; H3K9me2 &gt; H3K9me1. Interacts with histone H3 peptides unmethylated at 'Lys-5' (H3K4me0). Interacts with MECP2, SMC1 and SMC3. Interacts with SETDB1, TRIM28 and ZNF274.

Its subcellular location is the nucleus. It is found in the chromosome. The protein resides in the telomere. The protein localises to the PML body. It carries out the reaction ATP + H2O = ADP + phosphate + H(+). In terms of biological role, involved in transcriptional regulation and chromatin remodeling. Facilitates DNA replication in multiple cellular environments and is required for efficient replication of a subset of genomic loci. Binds to DNA tandem repeat sequences in both telomeres and euchromatin and in vitro binds DNA quadruplex structures. May help stabilizing G-rich regions into regular chromatin structures by remodeling G4 DNA and incorporating H3.3-containing nucleosomes. Catalytic component of the chromatin remodeling complex ATRX:DAXX which has ATP-dependent DNA translocase activity and catalyzes the replication-independent deposition of histone H3.3 in pericentric DNA repeats outside S-phase and telomeres, and the in vitro remodeling of H3.3-containing nucleosomes. Its heterochromatin targeting is proposed to involve a combinatorial readout of histone H3 modifications (specifically methylation states of H3K9 and H3K4) and association with CBX5. Involved in maintaining telomere structural integrity in embryonic stem cells which probably implies recruitment of CBX5 to telomeres. May be involved in transcriptional regulation of telomeric repeat-containing RNA (TERRA). Acts as a negative regulator of chromatin incorporation of transcriptionally repressive histone MACROH2A1, particularily at telomeres. Participates in the allele-specific gene expression at the imprinted IGF2/H19 gene locus. On the maternal allele, required for the chromatin occupancy of SMC1 and CTCTF within the H19 imprinting control region (ICR) and involved in esatblishment of histone tails modifications in the ICR. May be involved in brain development and facial morphogenesis. Binds to zinc-finger coding genes with atypical chromatin signatures and regulates its H3K9me3 levels. Forms a complex with ZNF274, TRIM28 and SETDB1 to facilitate the deposition and maintenance of H3K9me3 at the 3' exons of zinc-finger genes. The protein is Transcriptional regulator ATRX (ATRX) of Pongo pygmaeus (Bornean orangutan).